The following is a 707-amino-acid chain: Drebrin (707 aa).

N-acetylalanine is present on Ala-2. In terms of domain architecture, ADF-H spans 3–134 (GVSFSGHRLE…DAGAIGQRLS (132 aa)). A phosphoserine mark is found at Ser-141 and Ser-142. The span at 209–236 (ERMEQERQEQEERERRYREREQQIEEHR) shows a compositional bias: basic and acidic residues. Disordered regions lie at residues 209–438 (ERME…VCKE), 452–497 (AEEP…TSVA), 531–557 (WPGN…AEAS), 582–609 (LLNF…PLAA), and 630–707 (LEPE…EGGD). Ser-241 carries the phosphoserine modification. Basic and acidic residues predominate over residues 288-298 (DNPREFFRQQE). Over residues 329-343 (SDSGPSSSSSSSSSP) the composition is skewed to low complexity. The residue at position 342 (Ser-342) is a Phosphoserine. Residues 355-364 (RTPNLSSSLP) are compositionally biased toward polar residues. Residues Thr-377 and Thr-381 each carry the phosphothreonine modification. Residues 380–395 (PTRSPSDSSTASTPIT) are compositionally biased toward polar residues. Phosphoserine occurs at positions 383, 385, and 391. Position 392 is a phosphothreonine (Thr-392). Over residues 409-420 (QPPPPPPPPPPA) the composition is skewed to pro residues. The span at 428 to 438 (PRLDGEEVCKE) shows a compositional bias: basic and acidic residues. Ser-467 is modified (phosphoserine). Thr-549 bears the Phosphothreonine mark. Polar residues predominate over residues 639 to 652 (NGETTQKEGTQQAS). Residue Ser-659 is modified to Phosphoserine. Residues 695–707 (PVPEEEEGFEGGD) are compositionally biased toward acidic residues.

As to quaternary structure, interacts with RUFY. Interacts with CXCR4; this interaction is enhanced by antigenic stimulation. Interacts (via ADF-H domain) with ZMYND8 (via N-terminus); the interaction leads to sequestering of ZMYND8 in the cytoplasm. Post-translationally, ISGylated. As to expression, brain neurons.

It localises to the cytoplasm. The protein localises to the cell projection. The protein resides in the dendrite. Its subcellular location is the cell cortex. It is found in the cell junction. It localises to the growth cone. Its function is as follows. Actin cytoskeleton-organizing protein that plays a role in the formation of cell projections. Required for actin polymerization at immunological synapses (IS) and for the recruitment of the chemokine receptor CXCR4 to IS. Plays a role in dendritic spine morphogenesis and organization, including the localization of the dopamine receptor DRD1 to the dendritic spines. Involved in memory-related synaptic plasticity in the hippocampus. The polypeptide is Drebrin (Dbn1) (Rattus norvegicus (Rat)).